We begin with the raw amino-acid sequence, 131 residues long: Small ribosomal subunit protein bS6 (131 aa).

The segment at 98–131 (EASPMVKAKDERRERREDFANETSEETEAGDSEE) is disordered. Residues 104 to 116 (KAKDERRERREDF) show a composition bias toward basic and acidic residues. Over residues 120-131 (TSEETEAGDSEE) the composition is skewed to acidic residues.

The protein belongs to the bacterial ribosomal protein bS6 family.

Binds together with bS18 to 16S ribosomal RNA. The sequence is that of Small ribosomal subunit protein bS6 from Edwardsiella ictaluri (strain 93-146).